The primary structure comprises 436 residues: Trigger factor (436 aa).

In terms of domain architecture, PPIase FKBP-type spans 161 to 246 (DDQLNIDFVG…VNSVAEPKLP (86 aa)).

This sequence belongs to the FKBP-type PPIase family. Tig subfamily.

It localises to the cytoplasm. It catalyses the reaction [protein]-peptidylproline (omega=180) = [protein]-peptidylproline (omega=0). Involved in protein export. Acts as a chaperone by maintaining the newly synthesized protein in an open conformation. Functions as a peptidyl-prolyl cis-trans isomerase. The polypeptide is Trigger factor (Pseudomonas paraeruginosa (strain DSM 24068 / PA7) (Pseudomonas aeruginosa (strain PA7))).